The chain runs to 322 residues: Succinate/fumarate mitochondrial transporter (322 aa).

Solcar repeat units follow at residues 8–99, 111–202, and 212–303; these read SHPA…YRTL, GNTF…LKEF, and LPSW…VREH. 6 helical membrane-spanning segments follow: residues 11 to 31, 68 to 88, 114 to 134, 177 to 193, 219 to 235, and 278 to 295; these read AINL…CHPL, FLAL…KMAI, FVAG…PMEV, GVSL…GANF, CIGL…NAPL, and GITP…VTFT.

The protein belongs to the mitochondrial carrier (TC 2.A.29) family.

The protein localises to the mitochondrion inner membrane. Functionally, transports cytoplasmic succinate, derived from isocitrate by the action of isocitrate lyase in the cytosol, into the mitochondrial matrix in exchange for fumarate. This chain is Succinate/fumarate mitochondrial transporter (SFC1), found in Saccharomyces cerevisiae (strain ATCC 204508 / S288c) (Baker's yeast).